The chain runs to 428 residues: MLDSKLLRTATEQVAKGLAKRGYELDVAKIQALEETRKAIQIKTENLQSERNTRSKAIGKAKQAGEDVAPLMQAVESIKQQLVDAEADLARVQTEWDEFVKAIPNIPADEVPEGKSDEDNVEIRRWGMPRSFHFPIKDHVDLGADLGGLDFDTATKITGSRFAVLRGGIARLHRALAQFMLDTHINQHGYEEVNIPFIVNRDSLFGTGQLPKFEEDLFKLTDDREFYLIPTAEVPLTNIYRDAILEDNQLPIKFVAHSPCFRSEAGSYGRDTRGMIRQHQFEKVELVWLVQPEKSDEALEALVAHAEKILHDLELPHRTVVLCGGDIGFSAAKTYDIEVWVPSQNKYREISSCSNVRDFQARRMLARFRNKETGKPELLHTLNGSGLAVGRTLLAVLENYQQEDGSVIIPEVLRPYMGGQEVLAPVKQ.

231 to 233 (TAE) lines the L-serine pocket. 262–264 (RSE) is a binding site for ATP. L-serine is bound at residue Glu285. Residue 349-352 (EISS) coordinates ATP. Ser385 contacts L-serine.

The protein belongs to the class-II aminoacyl-tRNA synthetase family. Type-1 seryl-tRNA synthetase subfamily. As to quaternary structure, homodimer. The tRNA molecule binds across the dimer.

The protein resides in the cytoplasm. The enzyme catalyses tRNA(Ser) + L-serine + ATP = L-seryl-tRNA(Ser) + AMP + diphosphate + H(+). It catalyses the reaction tRNA(Sec) + L-serine + ATP = L-seryl-tRNA(Sec) + AMP + diphosphate + H(+). The protein operates within aminoacyl-tRNA biosynthesis; selenocysteinyl-tRNA(Sec) biosynthesis; L-seryl-tRNA(Sec) from L-serine and tRNA(Sec): step 1/1. In terms of biological role, catalyzes the attachment of serine to tRNA(Ser). Is also able to aminoacylate tRNA(Sec) with serine, to form the misacylated tRNA L-seryl-tRNA(Sec), which will be further converted into selenocysteinyl-tRNA(Sec). The chain is Serine--tRNA ligase from Cellvibrio japonicus (strain Ueda107) (Pseudomonas fluorescens subsp. cellulosa).